The primary structure comprises 317 residues: Acetyl-coenzyme A carboxylase carboxyl transferase subunit alpha (317 aa).

A CoA carboxyltransferase C-terminal domain is found at 39–293 (RLKKKSISLT…KTSLAQGVAE (255 aa)).

It belongs to the AccA family. In terms of assembly, acetyl-CoA carboxylase is a heterohexamer composed of biotin carboxyl carrier protein (AccB), biotin carboxylase (AccC) and two subunits each of ACCase subunit alpha (AccA) and ACCase subunit beta (AccD).

The protein resides in the cytoplasm. The enzyme catalyses N(6)-carboxybiotinyl-L-lysyl-[protein] + acetyl-CoA = N(6)-biotinyl-L-lysyl-[protein] + malonyl-CoA. The protein operates within lipid metabolism; malonyl-CoA biosynthesis; malonyl-CoA from acetyl-CoA: step 1/1. Its function is as follows. Component of the acetyl coenzyme A carboxylase (ACC) complex. First, biotin carboxylase catalyzes the carboxylation of biotin on its carrier protein (BCCP) and then the CO(2) group is transferred by the carboxyltransferase to acetyl-CoA to form malonyl-CoA. The sequence is that of Acetyl-coenzyme A carboxylase carboxyl transferase subunit alpha from Marinobacter nauticus (strain ATCC 700491 / DSM 11845 / VT8) (Marinobacter aquaeolei).